We begin with the raw amino-acid sequence, 350 residues long: S-adenosylmethionine:tRNA ribosyltransferase-isomerase (350 aa).

It belongs to the QueA family. As to quaternary structure, monomer.

Its subcellular location is the cytoplasm. The catalysed reaction is 7-aminomethyl-7-carbaguanosine(34) in tRNA + S-adenosyl-L-methionine = epoxyqueuosine(34) in tRNA + adenine + L-methionine + 2 H(+). It participates in tRNA modification; tRNA-queuosine biosynthesis. Functionally, transfers and isomerizes the ribose moiety from AdoMet to the 7-aminomethyl group of 7-deazaguanine (preQ1-tRNA) to give epoxyqueuosine (oQ-tRNA). The protein is S-adenosylmethionine:tRNA ribosyltransferase-isomerase of Bacillus mycoides (strain KBAB4) (Bacillus weihenstephanensis).